Here is a 356-residue protein sequence, read N- to C-terminus: DNA polymerase IV (356 aa).

Positions 6–186 (IVHIDMDAFY…LPVDAFHGIG (181 aa)) constitute a UmuC domain. Positions 10 and 104 each coordinate Mg(2+). Glutamate 105 is a catalytic residue.

This sequence belongs to the DNA polymerase type-Y family. Monomer. Requires Mg(2+) as cofactor.

It is found in the cytoplasm. It catalyses the reaction DNA(n) + a 2'-deoxyribonucleoside 5'-triphosphate = DNA(n+1) + diphosphate. Poorly processive, error-prone DNA polymerase involved in untargeted mutagenesis. Copies undamaged DNA at stalled replication forks, which arise in vivo from mismatched or misaligned primer ends. These misaligned primers can be extended by PolIV. Exhibits no 3'-5' exonuclease (proofreading) activity. May be involved in translesional synthesis, in conjunction with the beta clamp from PolIII. This is DNA polymerase IV from Gluconobacter oxydans (strain 621H) (Gluconobacter suboxydans).